The primary structure comprises 627 residues: Sister chromatid cohesion 1 protein 1 (627 aa).

Disordered stretches follow at residues 211–294, 395–416, and 461–510; these read GDDE…TATS, MHNH…NLDS, and GDDV…VAEE. Basic and acidic residues-rich tracts occupy residues 254–263, 272–282, and 395–408; these read EQQENRRDGF, IPDKEEHDRPQ, and MHNH…ERSD. Over residues 467–487 the composition is skewed to polar residues; that stretch reads MPSTPSARGAASINNIEISSK.

Belongs to the rad21 family. As to quaternary structure, component of the cohesin complex. Isoform 2 is expressed at low levels in buds, leaves and roots, whereas expression of isoform 1 is confined to buds.

The protein resides in the nucleus. Involved in chromosome condensation, pairing and segregation during meiosis. Responsible for cohesion between replicated sister chromatids. This Arabidopsis thaliana (Mouse-ear cress) protein is Sister chromatid cohesion 1 protein 1 (SYN1).